We begin with the raw amino-acid sequence, 840 residues long: MALKKPKKSRLTTEEIKQQLEGSTIKEQSITKEVETSFLDYSMSVIVARALPDVRDGFKPVHRRALFAAFENGMTHDKPYKKSARWVGDVIGKYHPHGDQAVYQTIVRMAQDFSMRYLLVDGHGNFGSIDGDSAAAMRYTEARLSKISYELLKYIDKETVDFVPNYDASEQEPSVLPSGFPNLLTNGTTGIAVGMATNIPPHNLTEVCQAIKAYAKNHNVTISEIMEYLKGPDFPTGAEIYGDSGIIKYFNTGRGSVTIRSKYEIEDIGQGRVAIVVTEIPYMVNKANLIEKIVELVTNKQIEGISDLRDESSRDGIRIVIEVKRDVIPEVLLNKLFKTTPLQTNFSVNNLALVNGVPMVLNIKEMIKYYFEHQIEILVRRTNFDLKKAKERIHIVEGLVIAVNNIDEVIKIIKASGDDDIASKSLIQRFDLTELQTKAILEMRLRALTGLNIDKLKKEYEDLILVIKDLEDVLNNYNRQVNIICENLDYLIEKFGDERRTEIMYGVSSHIDDEDLIPVEDIVVTMSKRGYFKRLPIDTYKNQRRGGVGVQGLKTYEDDDVEKILVANTHTDLLFFSDLGRVYRLRGHEVPLGSRQSKGIPAINFLPIEKSESILTILPIDNYDQGSLFFTTSKGIIKRANLSDFESIRANGKIAITLKDGDKLFSVMQTLGNDEVFIGASNGNVIRFNENDAREMGRIATGVKGINLENDEYVVGTGLSSHGEYVLAVGSKGLGKLTDINDYRLTKRGAKGVNTLKVNDKTGNLVSIKVVNREEEALIITTSGKVIRLSIKDISVIGRNTSGVKLISLENKEEVKSIAIFKKEEINDEQLLQENDYNLK.

The Topo IIA-type catalytic domain occupies 51-516; sequence LPDVRDGFKP…VSSHIDDEDL (466 aa). Residue tyrosine 139 is the O-(5'-phospho-DNA)-tyrosine intermediate of the active site. A GyrA-box motif is present at residues 543 to 549; sequence QRRGGVG.

Belongs to the type II topoisomerase GyrA/ParC subunit family. As to quaternary structure, heterotetramer, composed of two GyrA and two GyrB chains. In the heterotetramer, GyrA contains the active site tyrosine that forms a transient covalent intermediate with DNA, while GyrB binds cofactors and catalyzes ATP hydrolysis.

The protein localises to the cytoplasm. It carries out the reaction ATP-dependent breakage, passage and rejoining of double-stranded DNA.. A type II topoisomerase that negatively supercoils closed circular double-stranded (ds) DNA in an ATP-dependent manner to modulate DNA topology and maintain chromosomes in an underwound state. Negative supercoiling favors strand separation, and DNA replication, transcription, recombination and repair, all of which involve strand separation. Also able to catalyze the interconversion of other topological isomers of dsDNA rings, including catenanes and knotted rings. Type II topoisomerases break and join 2 DNA strands simultaneously in an ATP-dependent manner. The sequence is that of DNA gyrase subunit A from Ureaplasma parvum serovar 3 (strain ATCC 700970).